A 979-amino-acid chain; its full sequence is MHC class II regulatory factor RFX1 (979 aa).

3 disordered regions span residues 1–136, 181–227, and 370–405; these read MATQ…QVVQ, QSAA…PTGT, and TSTG…STGG. The span at 12–44 shows a compositional bias: pro residues; the sequence is APPPSQPPQAPPQAQPQPPPPPPPAAPQPPQPP. Over residues 45–73 the composition is skewed to low complexity; it reads TAAATPQPQYVTELQSPQPQAQPPGGQKQ. The residue at position 60 (S60) is a Phosphoserine. Positions 81 to 96 are enriched in pro residues; the sequence is VPAPSQPTGAPTPSPA. Residues 114–126 are compositionally biased toward polar residues; it reads ETVSEASPGSTAS. Positions 127 to 136 are enriched in low complexity; the sequence is QTGVPTQVVQ. Composition is skewed to polar residues over residues 190–203 and 209–220; these read GQVS…QQVH and SPVQANSSSSKT. A compositionally biased stretch (low complexity) spans 370 to 379; that stretch reads TSTGAGASNS. A compositionally biased stretch (gly residues) spans 380–405; sequence SGGGGSGGGGGGGGGGGGGGSGSTGG. The RFX-type winged-helix DNA-binding region spans 438-513; it reads TVQWLLDNYE…YHYYGLRIKA (76 aa). Positions 744 to 979 are necessary for dimerization; the sequence is FAQTLRRYTS…GLFVQALPSS (236 aa). Positions 915-960 are disordered; that stretch reads SLNPLDPDKDEEEEEEEESEDELPQDISLAAGGESPALGPETLEPP. Acidic residues predominate over residues 922–938; that stretch reads DKDEEEEEEEESEDELP. Phosphoserine is present on residues S978 and S979.

Belongs to the RFX family. As to quaternary structure, homodimer; binds DNA as a homodimer. Heterodimer; heterodimerizes with RFX2 and RFX3.

It localises to the nucleus. Regulatory factor essential for MHC class II genes expression. Binds to the X boxes of MHC class II genes. Also binds to an inverted repeat (ENH1) required for hepatitis B virus genes expression and to the most upstream element (alpha) of the RPL30 promoter. This chain is MHC class II regulatory factor RFX1 (RFX1), found in Homo sapiens (Human).